We begin with the raw amino-acid sequence, 332 residues long: Beta-hexosaminidase (332 aa).

Substrate is bound by residues aspartate 62, arginine 70, arginine 131, and 161 to 162; that span reads KH. The active-site Proton donor/acceptor is histidine 174. Aspartate 244 (nucleophile) is an active-site residue.

It belongs to the glycosyl hydrolase 3 family. NagZ subfamily.

The protein resides in the cytoplasm. It catalyses the reaction Hydrolysis of terminal non-reducing N-acetyl-D-hexosamine residues in N-acetyl-beta-D-hexosaminides.. It functions in the pathway cell wall biogenesis; peptidoglycan recycling. Its function is as follows. Plays a role in peptidoglycan recycling by cleaving the terminal beta-1,4-linked N-acetylglucosamine (GlcNAc) from peptide-linked peptidoglycan fragments, giving rise to free GlcNAc, anhydro-N-acetylmuramic acid and anhydro-N-acetylmuramic acid-linked peptides. The protein is Beta-hexosaminidase of Pseudomonas aeruginosa (strain LESB58).